We begin with the raw amino-acid sequence, 331 residues long: Glycerol-3-phosphate dehydrogenase [NAD(P)+] (331 aa).

NADPH is bound by residues W13, R33, and K103. K103, G131, and T133 together coordinate sn-glycerol 3-phosphate. NADPH is bound at residue A135. Sn-glycerol 3-phosphate is bound by residues K187, D240, S250, R251, and N252. K187 (proton acceptor) is an active-site residue. R251 lines the NADPH pocket. NADPH contacts are provided by V275 and E277.

Belongs to the NAD-dependent glycerol-3-phosphate dehydrogenase family.

It is found in the cytoplasm. It catalyses the reaction sn-glycerol 3-phosphate + NAD(+) = dihydroxyacetone phosphate + NADH + H(+). The enzyme catalyses sn-glycerol 3-phosphate + NADP(+) = dihydroxyacetone phosphate + NADPH + H(+). The protein operates within membrane lipid metabolism; glycerophospholipid metabolism. Its function is as follows. Catalyzes the reduction of the glycolytic intermediate dihydroxyacetone phosphate (DHAP) to sn-glycerol 3-phosphate (G3P), the key precursor for phospholipid synthesis. The polypeptide is Glycerol-3-phosphate dehydrogenase [NAD(P)+] (Novosphingobium aromaticivorans (strain ATCC 700278 / DSM 12444 / CCUG 56034 / CIP 105152 / NBRC 16084 / F199)).